We begin with the raw amino-acid sequence, 260 residues long: Activator of 90 kDa heat shock protein ATPase homolog 2 (260 aa).

The protein belongs to the AHA1 family.

Functionally, co-chaperone that stimulates HSP90 ATPase activity. The sequence is that of Activator of 90 kDa heat shock protein ATPase homolog 2 (AHSA2) from Bos taurus (Bovine).